A 367-amino-acid chain; its full sequence is MKKQSKTHKVDYKYYNSGSKTSRNRNVQQLETNNKIPQSDVVGPVVKISKEVTNETDIISPNNPIINQNQEIFDTYQKSYIEAKKFLNDHNIKISTITLDCKLGTLIDVDLFAKNVILKEDQIVSVKFGNRNDPATNRTIVVLKTKKKPSTKNFYNQVTILMKPTNNPERNYINIKVFKNGSLQMTGCKDMEDFNNVTVKLIEILKNGRRSKKDNKHIKFITDPNKIGIYDVKIRMINSDFKLDYKVDRKKLAKILKKYHGQNTKDKEIGYVECKYQPTGGHSCVNIKYNNDGNKTSIFVFQTGSIIITGAKNLNHIISAYFFIHKVLSRYYKKIKILPLQQNLVQLEIAKYFQKVNQKTYPVEIQE.

Residues 1–26 (MKKQSKTHKVDYKYYNSGSKTSRNRN) are disordered. The span at 16–26 (NSGSKTSRNRN) shows a compositional bias: polar residues.

It belongs to the TBP family.

The sequence is that of TATA-box-binding protein-like from Acanthamoeba polyphaga (Amoeba).